The following is a 900-amino-acid chain: 3'-5' exonuclease DinG (900 aa).

One can recognise an Exonuclease domain in the interval 8–161; sequence VVDLETTGNQ…DEDAATTAQL (154 aa). Residues 241 to 496 form the Helicase ATP-binding domain; it reads TLVTKELGLT…KSIDLLEQQR (256 aa). 276–283 serves as a coordination point for ATP; the sequence is APLGSGKS. Positions 448–451 match the DEAH box motif; it reads DEAH. The Helicase C-terminal domain occupies 714-883; it reads YVIEYVSVVE…RYRQKKGDIK (170 aa).

This sequence belongs to the helicase family. DinG subfamily. Type 2 sub-subfamily.

In terms of biological role, 3'-5' exonuclease. In Staphylococcus saprophyticus subsp. saprophyticus (strain ATCC 15305 / DSM 20229 / NCIMB 8711 / NCTC 7292 / S-41), this protein is 3'-5' exonuclease DinG.